The chain runs to 88 residues: Cytochrome c oxidase subunit 6B2 (88 aa).

The interval 1–21 is disordered; sequence MLGVQAQMPAPGQWTTPPFDP. The region spanning 29-75 is the CHCH domain; sequence TRNCYQNFLDYHRCVKTMDRRGKNTQACDYYFRVFHSLCPVSWVQRW. Positions 32 to 42 match the Cx9C motif motif; that stretch reads CYQNFLDYHRC. Disulfide bonds link Cys32–Cys67 and Cys42–Cys56. A Cx10C motif motif is present at residues 56 to 67; the sequence is CDYYFRVFHSLC.

This sequence belongs to the cytochrome c oxidase subunit 6B family. Component of the cytochrome c oxidase (complex IV, CIV), a multisubunit enzyme composed of 14 subunits. The complex is composed of a catalytic core of 3 subunits MT-CO1, MT-CO2 and MT-CO3, encoded in the mitochondrial DNA, and 11 supernumerary subunits COX4I, COX5A, COX5B, COX6A, COX6B, COX6C, COX7A, COX7B, COX7C, COX8 and NDUFA4, which are encoded in the nuclear genome. The complex exists as a monomer or a dimer and forms supercomplexes (SCs) in the inner mitochondrial membrane with NADH-ubiquinone oxidoreductase (complex I, CI) and ubiquinol-cytochrome c oxidoreductase (cytochrome b-c1 complex, complex III, CIII), resulting in different assemblies (supercomplex SCI(1)III(2)IV(1) and megacomplex MCI(2)III(2)IV(2)). In terms of tissue distribution, testis specific.

The protein resides in the mitochondrion inner membrane. Its pathway is energy metabolism; oxidative phosphorylation. Component of the cytochrome c oxidase, the last enzyme in the mitochondrial electron transport chain which drives oxidative phosphorylation. The respiratory chain contains 3 multisubunit complexes succinate dehydrogenase (complex II, CII), ubiquinol-cytochrome c oxidoreductase (cytochrome b-c1 complex, complex III, CIII) and cytochrome c oxidase (complex IV, CIV), that cooperate to transfer electrons derived from NADH and succinate to molecular oxygen, creating an electrochemical gradient over the inner membrane that drives transmembrane transport and the ATP synthase. Cytochrome c oxidase is the component of the respiratory chain that catalyzes the reduction of oxygen to water. Electrons originating from reduced cytochrome c in the intermembrane space (IMS) are transferred via the dinuclear copper A center (CU(A)) of subunit 2 and heme A of subunit 1 to the active site in subunit 1, a binuclear center (BNC) formed by heme A3 and copper B (CU(B)). The BNC reduces molecular oxygen to 2 water molecules using 4 electrons from cytochrome c in the IMS and 4 protons from the mitochondrial matrix. The sequence is that of Cytochrome c oxidase subunit 6B2 (Cox6b2) from Rattus norvegicus (Rat).